A 396-amino-acid polypeptide reads, in one-letter code: Serine/threonine-protein kinase GRIK1 (396 aa).

Residues 22–65 form a disordered region; the sequence is ERSRHSPNPYDDDTYSHDSGETSNPGGDDEEGEEEEEVEELSRS. Acidic residues predominate over residues 48 to 60; it reads GDDEEGEEEEEVE. The region spanning 108–369 is the Protein kinase domain; that stretch reads FVRERKIGSG…LKAVAEHPWI (262 aa). ATP is bound by residues 114–122 and lysine 137; that span reads IGSGSYGKV. Position 154 is a phosphothreonine; by autocatalysis (threonine 154). Aspartate 239 serves as the catalytic Proton acceptor. Serine 261 carries the phosphoserine; by KIN10 modification.

This sequence belongs to the protein kinase superfamily. Ser/Thr protein kinase family. As to quaternary structure, associates with the SNF1-related protein kinase (SnRK) complex. Interacts with AL1, a geminivirus (TGMV) protein essential for viral replication. In terms of tissue distribution, expressed in shoot apical meristem, leaf primordium and emerging petiole (at protein level).

Its subcellular location is the cytoplasm. It localises to the nucleus. The enzyme catalyses L-seryl-[protein] + ATP = O-phospho-L-seryl-[protein] + ADP + H(+). It carries out the reaction L-threonyl-[protein] + ATP = O-phospho-L-threonyl-[protein] + ADP + H(+). Activated when autophosphorylated at Thr-154 and inactivated when phosphorylated at Ser-261 by SnRK1.1/KIN10. Activates SnRK1.1/KIN10 and SnRK1.2/KIN11 by phosphorylation of their activation-loop 'Thr-198' and 'Thr-176', respectively. Required for the regulation by SnRK1 kinases of the transcription of a large set of genes, the modification the activity of metabolic enzymes, and the control of various nutrient-responsive cellular developmental processes. The chain is Serine/threonine-protein kinase GRIK1 (GRIK1) from Arabidopsis thaliana (Mouse-ear cress).